Consider the following 150-residue polypeptide: Myosin, essential light chain (150 aa).

EF-hand domains lie at 3–38 and 75–110; these read ASADQIQECFSIFDKDNDGKVSVEDIGACLRSLGKS and EQQKEMLDAFKALDKEGHGTIQGAELRQLLTTLGDY. Residues Asp16, Asp18, Asp20, Lys22, and Asp27 each contribute to the Ca(2+) site.

In terms of assembly, myosin is a hexamer of 2 heavy chains and 4 light chains (two regulatory light chains and two essential light chains).

This Dictyostelium discoideum (Social amoeba) protein is Myosin, essential light chain (mlcE).